The chain runs to 322 residues: UDP-N-acetylenolpyruvoylglucosamine reductase (322 aa).

The 167-residue stretch at 36-202 folds into the FAD-binding PCMH-type domain; sequence RAGGPAQVLF…TSVLFEGVPG (167 aa). Arg182 is a catalytic residue. The active-site Proton donor is Ser231. Glu301 is a catalytic residue.

This sequence belongs to the MurB family. FAD is required as a cofactor.

Its subcellular location is the cytoplasm. It catalyses the reaction UDP-N-acetyl-alpha-D-muramate + NADP(+) = UDP-N-acetyl-3-O-(1-carboxyvinyl)-alpha-D-glucosamine + NADPH + H(+). It participates in cell wall biogenesis; peptidoglycan biosynthesis. In terms of biological role, cell wall formation. The chain is UDP-N-acetylenolpyruvoylglucosamine reductase from Brucella suis (strain ATCC 23445 / NCTC 10510).